The sequence spans 309 residues: Ribosomal RNA small subunit methyltransferase H (309 aa).

S-adenosyl-L-methionine-binding positions include Gly-39–His-41, Asp-59, Phe-83, Asp-100, and Gln-107.

The protein belongs to the methyltransferase superfamily. RsmH family.

The protein resides in the cytoplasm. The enzyme catalyses cytidine(1402) in 16S rRNA + S-adenosyl-L-methionine = N(4)-methylcytidine(1402) in 16S rRNA + S-adenosyl-L-homocysteine + H(+). Functionally, specifically methylates the N4 position of cytidine in position 1402 (C1402) of 16S rRNA. The protein is Ribosomal RNA small subunit methyltransferase H of Delftia acidovorans (strain DSM 14801 / SPH-1).